The primary structure comprises 1543 residues: ATP-binding cassette sub-family C member 2 (1543 aa).

The Extracellular segment spans residues 1 to 26 (MDEFCNSTFWNLSLLKSPEADLPLCF). N-linked (GlcNAc...) asparagine glycosylation is found at Asn6 and Asn11. The helical transmembrane segment at 27 to 47 (EQTVLVWIPLGFLWLLAPWQL) threads the bilayer. Topologically, residues 48-67 (YRIYRSRTKRFAITKFYLAK) are cytoplasmic. Residues 68–88 (QVFVVCLLILAAIDLSLALTE) form a helical membrane-spanning segment. Over 89-92 (DTGQ) the chain is Extracellular. A helical membrane pass occupies residues 93–113 (ATIPPVKYTNPILYLCTWLLV). Residues 114–125 (LVIQHCRQCCIQ) lie on the Cytoplasmic side of the membrane. Residues 126 to 146 (KNSWFLSMFWILSLLCGIFQF) traverse the membrane as a helical segment. Topologically, residues 147–164 (QTLIRALLQDSKSNMTYS) are extracellular. Asn160 carries an N-linked (GlcNAc...) asparagine glycan. A helical transmembrane segment spans residues 165–185 (CLFFVSYGFQIVILILSAFSE). The Cytoplasmic portion of the chain corresponds to 186–311 (SSDSTHAPSA…DFPKSWLVKA (126 aa)). The disordered stretch occupies residues 260–285 (LKKSQQSPEGTSHGLTKKQSQSQDVL). Polar residues predominate over residues 263–283 (SQQSPEGTSHGLTKKQSQSQD). 2 positions are modified to phosphoserine: Ser279 and Ser281. Residues 312–332 (LFKTFYVVILKSFILKLAHDI) traverse the membrane as a helical segment. An ABC transmembrane type-1 1 domain is found at 320 to 603 (ILKSFILKLA…LPMVISSVIQ (284 aa)). At 333–358 (LLFLNPQLLKFLIGFVKDPDSYPWVG) the chain is on the extracellular side. Residues 359–379 (YIYAILMFSVTLIQSFFLQCY) form a helical membrane-spanning segment. The Cytoplasmic segment spans residues 380–435 (FQFCFVLGMTVRTTIIASVYKKALTLSNLARRQYTIGETVNLMSVDSQKLMDVTNY). A helical membrane pass occupies residues 436–456 (IHLLWSSVLQIALSIFFLWRE). The Extracellular segment spans residues 457–459 (LGP). Residues 460–480 (SILAGVGLMVLLVPVNGVLAT) traverse the membrane as a helical segment. The Cytoplasmic segment spans residues 481–542 (KIRKIQVQNM…NLLRFSQLQT (62 aa)). A helical membrane pass occupies residues 543–563 (ILIFILHLTPTLVSVITFSVY). Residues 564 to 585 (VLVDSQNVLNAEKAFTSITLFN) lie on the Extracellular side of the membrane. The helical transmembrane segment at 586 to 606 (ILRFPLAMLPMVISSVIQASV) threads the bilayer. At 607–969 (SVDRLEQYLG…VKFSIYLKYL (363 aa)) the chain is on the cytoplasmic side. The 225-residue stretch at 635-859 (VQFSEASFTW…KGVFAKNWKT (225 aa)) folds into the ABC transporter 1 domain. 669–676 (GTVGSGKS) contacts ATP. Phosphoserine is present on Ser876. Residues 903–927 (RENSLRRTLSRSSRSGSRRGKSLKS) are disordered. The span at 908–917 (RRTLSRSSRS) shows a compositional bias: low complexity. Residues Ser924 and Ser928 each carry the phosphoserine modification. Residues 970-990 (QAVGWWSLLFIVIFYVLNYVA) form a helical membrane-spanning segment. The ABC transmembrane type-1 2 domain maps to 977–1262 (LLFIVIFYVL…LVRMTSEVET (286 aa)). At 991–1031 (FIGTNLWLSAWTSDSEKQNGTDNSPSQRDMRIGVFGALGIA) the chain is on the extracellular side. Asn1009 is a glycosylation site (N-linked (GlcNAc...) asparagine). Residues 1032 to 1052 (QGIFLLSSSLWSIYACRNASK) form a helical membrane-spanning segment. Topologically, residues 1053–1095 (TLHRQLLTNILRAPMSFFDTTPTGRIVNRFAGDISTVDDTLPQ) are cytoplasmic. A helical transmembrane segment spans residues 1096–1116 (TLRSWLLCFFGIVSTLVMICM). Position 1117 (Ala1117) is a topological domain, extracellular. Residues 1118 to 1138 (TPIFIIIIIPLSILYVSVQVF) traverse the membrane as a helical segment. Residues 1139–1209 (YVATSRQLRR…TSNRWLAIRL (71 aa)) lie on the Cytoplasmic side of the membrane. Residues 1210–1230 (ELVGNLIVFCSALLLVIYKNS) form a helical membrane-spanning segment. The Extracellular portion of the chain corresponds to 1231 to 1232 (LT). Residues 1233–1253 (GDTVGFVLSNALNITQTLNWL) form a helical membrane-spanning segment. Topologically, residues 1254–1543 (VRMTSEVETN…GIESVNHTEL (290 aa)) are cytoplasmic. The ABC transporter 2 domain maps to 1298-1532 (IQFNNYQVRY…MGPFYLMAKE (235 aa)). 1332 to 1339 (GRTGAGKS) provides a ligand contact to ATP. Ser1436 bears the Phosphoserine mark.

It belongs to the ABC transporter superfamily. ABCC family. Conjugate transporter (TC 3.A.1.208) subfamily. In terms of tissue distribution, expressed in liver.

The protein resides in the apical cell membrane. The catalysed reaction is an S-substituted glutathione(in) + ATP + H2O = an S-substituted glutathione(out) + ADP + phosphate + H(+). The enzyme catalyses taurolithocholate 3-sulfate(in) + ATP + H2O = taurolithocholate 3-sulfate(out) + ADP + phosphate + H(+). It catalyses the reaction ATP + H2O + xenobioticSide 1 = ADP + phosphate + xenobioticSide 2.. It carries out the reaction leukotriene C4(in) + ATP + H2O = leukotriene C4(out) + ADP + phosphate + H(+). The catalysed reaction is 17beta-estradiol 17-O-(beta-D-glucuronate)(in) + ATP + H2O = 17beta-estradiol 17-O-(beta-D-glucuronate)(out) + ADP + phosphate + H(+). The enzyme catalyses (4Z,15Z)-bilirubin IXalpha C8-beta-D-glucuronoside(in) + ATP + H2O = (4Z,15Z)-bilirubin IXalpha C8-beta-D-glucuronoside(out) + ADP + phosphate + H(+). It catalyses the reaction (4Z,15Z)-bilirubin IXalpha C8,C12-beta-D-bisglucuronoside(in) + ATP + H2O = (4Z,15Z)-bilirubin IXalpha C8,C12-beta-D-bisglucuronoside(out) + ADP + phosphate + H(+). Functionally, ATP-dependent transporter of the ATP-binding cassette (ABC) family that binds and hydrolyzes ATP to enable active transport of various substrates including many drugs, toxicants and endogenous compound across cell membranes. Transports a wide variety of conjugated organic anions such as sulfate-, glucuronide- and glutathione (GSH)-conjugates of endo- and xenobiotics substrates. Mediates hepatobiliary excretion of mono- and bis-glucuronidated bilirubin molecules and therefore play an important role in bilirubin detoxification. Mediates also hepatobiliary excretion of others glucuronide conjugates such as 17beta-estradiol 17-glucosiduronic acid and leukotriene C4. Transports sulfated bile salt such as taurolithocholate sulfate. Transports various anticancer drugs, such as anthracycline, vinca alkaloid and methotrexate and HIV-drugs such as protease inhibitors. In Mus musculus (Mouse), this protein is ATP-binding cassette sub-family C member 2.